We begin with the raw amino-acid sequence, 1145 residues long: Structure-specific endonuclease subunit SLX4 (1145 aa).

Positions 48–108 are disordered; the sequence is ADIPVQPDPP…GKSKQQPSIS (61 aa). Residues 321–372 are a coiled coil; sequence ERETQKCRQLRQQHELVYAELERYYGDPQKLEEEVMQELDELEKLVADNMIE. Residues 382 to 393 show a composition bias toward low complexity; the sequence is EAESSSTGSSPS. Disordered regions lie at residues 382–442, 613–634, and 666–689; these read EAES…EDEP, QSSH…SSFS, and SAEK…DLTQ. Basic and acidic residues predominate over residues 395–410; it reads EPPDKRPKMTMEDKEN. Polar residues-rich tracts occupy residues 411-430, 613-633, and 678-689; these read LQPT…TRCT, QSSH…SSSF, and YKQSDASVDLTQ.

This sequence belongs to the SLX4 family. In terms of assembly, forms a heterodimer with SLX1. Interacts with mei-9; catalytic subunit of the MEI-9-ERCC1 endonuclease.

It localises to the nucleus. Regulatory subunit that interacts with and increases the activity of different structure-specific endonucleases. Has several distinct roles in protecting genome stability by resolving diverse forms of deleterious DNA structures originating from replication and recombination intermediates and from DNA damage. Component of the SLX1-SLX4 structure-specific endonuclease that resolves DNA secondary structures generated during DNA repair and recombination. Has endonuclease activity towards branched DNA substrates, introducing single-strand cuts in duplex DNA close to junctions with ss-DNA. Interacts with the structure-specific MEI-9-ERCC1 endonuclease to generate meiotic crossovers. This chain is Structure-specific endonuclease subunit SLX4 (mus312), found in Drosophila melanogaster (Fruit fly).